Reading from the N-terminus, the 135-residue chain is Interleukin-4 (135 aa).

A signal peptide spans 1–24 (MGLTSQLIPALVCLLVCTSHFVHG). 2 disulfide bridges follow: cysteine 48/cysteine 85 and cysteine 70/cysteine 105. N-linked (GlcNAc...) asparagine glycosylation is found at asparagine 62 and asparagine 96.

It belongs to the IL-4/IL-13 family.

It localises to the secreted. In terms of biological role, participates in at least several B-cell activation processes as well as of other cell types. It is a costimulator of DNA-synthesis. It induces the expression of class II MHC molecules on resting B-cells. It enhances both secretion and cell surface expression of IgE and IgG1. It also regulates the expression of the low affinity Fc receptor for IgE (CD23) on both lymphocytes and monocytes. Positively regulates IL31RA expression in macrophages. Stimulates autophagy in dendritic cells by interfering with mTORC1 signaling and through the induction of RUFY4. The polypeptide is Interleukin-4 (IL4) (Ovis aries (Sheep)).